The following is a 673-amino-acid chain: G-protein-signaling modulator 1 (673 aa).

The interval 1-507 (MASPAPPVAE…DLLSKFQSSR (507 aa)) is mediates association with membranes. TPR repeat units follow at residues 28-61 (CLEL…GTED), 66-99 (SAIY…ARTI), 106-139 (AKAS…AQEQ), 146-178 (ARAL…PPDV), 180-199 (ETLH…VKEL), 206-239 (GRAY…AKEF), 246-279 (RRAY…SRQL), 286-319 (AQAC…AQEL), and 326-359 (GRAC…SQEI). Positions 361–485 (DRNGELTARM…VRVQVPRTGI (125 aa)) are interaction with STK11/LKB1. Serine 410 carries the phosphoserine modification. Arginine 418 is modified (omega-N-methylarginine). Basic and acidic residues predominate over residues 420-439 (PLDREQNGETHHTGDWRGPG). Residues 420–475 (PLDREQNGETHHTGDWRGPGRDSLPLPMRSRKYQEGPDAIERRPREGSHSPLDSAD) are disordered. A phosphoserine mark is found at serine 442, serine 467, serine 469, serine 490, and serine 491. The span at 451 to 467 (KYQEGPDAIERRPREGS) shows a compositional bias: basic and acidic residues. The 23-residue stretch at 493–515 (EECFFDLLSKFQSSRMDDQRCPL) folds into the GoLoco 1 domain. The interval 508–531 (MDDQRCPLEEGQAGAAEATAAPSV) is disordered. The span at 516 to 528 (EEGQAGAAEATAA) shows a compositional bias: low complexity. 2 positions are modified to phosphoserine: serine 543 and serine 567. 3 consecutive GoLoco domains span residues 546–568 (TEEF…RASV), 594–616 (GDEF…RCPP), and 628–650 (DEDF…RVDL). The segment at 644–673 (DEQRVDLAGSPEQEASGLPDPQQQCPPGAS) is disordered. Serine 653 bears the Phosphoserine mark. The span at 664 to 673 (PQQQCPPGAS) shows a compositional bias: polar residues.

This sequence belongs to the GPSM family. In terms of assembly, interacts with GNAI1 and GNAI2 preferentially in their GDP-bound state. May also interact with GNAO1. Interacts with INSC/inscuteable and FRMPD1. Interacts with GNAI3. Interacts with STK11/LKB1 and MACF1. Post-translationally, phosphorylation regulates interaction with G(i/o) alpha. Expressed in neural progenitor cells (at protein level).

The protein resides in the cytoplasm. It localises to the cytosol. The protein localises to the endoplasmic reticulum membrane. Its subcellular location is the golgi apparatus membrane. It is found in the cell membrane. Its function is as follows. Guanine nucleotide dissociation inhibitor (GDI) which functions as a receptor-independent activator of heterotrimeric G-protein signaling. Keeps G(i/o) alpha subunit in its GDP-bound form thus uncoupling heterotrimeric G-proteins signaling from G protein-coupled receptors. Controls spindle orientation and asymmetric cell fate of cerebral cortical progenitors. May also be involved in macroautophagy in intestinal cells. May play a role in drug addiction. The sequence is that of G-protein-signaling modulator 1 (Gpsm1) from Mus musculus (Mouse).